We begin with the raw amino-acid sequence, 366 residues long: Galactoside alpha-(1,2)-fucosyltransferase 1 (366 aa).

Residues 1-8 are Cytoplasmic-facing; that stretch reads MWPLSHRH. The chain crosses the membrane as a helical; Signal-anchor for type II membrane protein span at residues 9-25; that stretch reads LCLAFLLVCVLSAISFF. Topologically, residues 26–366 are lumenal; that stretch reads LHIHQDSIRH…LSPLWTLAEP (341 aa). N-linked (GlcNAc...) asparagine glycans are attached at residues N66, N302, and N328.

Belongs to the glycosyltransferase 11 family.

It is found in the golgi apparatus. It localises to the golgi stack membrane. It catalyses the reaction a beta-D-galactosyl-(1-&gt;4)-N-acetyl-beta-D-glucosaminyl derivative + GDP-beta-L-fucose = an alpha-L-Fuc-(1-&gt;2)-beta-D-Gal-(1-&gt;4)-beta-D-GlcNAc derivative + GDP + H(+). It carries out the reaction a ganglioside GA1 + GDP-beta-L-fucose = a ganglioside Fuc-GA1 + GDP + H(+). The enzyme catalyses a beta-D-Gal-(1-&gt;3)-beta-D-GlcNAc-(1-&gt;3)-beta-D-Gal-(1-&gt;4)-beta-D-Glc-(1&lt;-&gt;1')-Cer(d18:1(4E)) + GDP-beta-L-fucose = alpha-L-fucosyl-(1-&gt;2)- beta-D-galactosyl-(1-&gt;3)-N-acetyl-beta-D-glucosaminyl-(1-&gt;3)-beta-D-galactosyl-(1-&gt;4)-beta-D-glucosyl-(1&lt;-&gt;1')-N-acylsphing-4-enine + GDP + H(+). The catalysed reaction is a neolactoside nLc4Cer(d18:1(4E)) + GDP-beta-L-fucose = a neolactoside IV(2)-alpha-Fuc-nLc4Cer(d18:1(4E)) + GDP + H(+). It catalyses the reaction a ganglioside GM1 + GDP-beta-L-fucose = a ganglioside Fuc-GM1 + GDP + H(+). It carries out the reaction beta-D-galactosyl-(1-&gt;3)-N-acetyl-D-galactosamine + GDP-beta-L-fucose = alpha-L-fucosyl-(1-&gt;2)-beta-D-galactosyl-(1-&gt;3)-N-acetyl-D-galactosamine + GDP + H(+). It participates in protein modification; protein glycosylation. In terms of biological role, catalyzes the transfer of L-fucose, from a guanosine diphosphate-beta-L-fucose, to the terminal galactose residue of glycoconjugates through an alpha(1,2) linkage leading to H antigen synthesis that is an intermediate substrate in the synthesis of ABO blood group antigens. H antigen is essential for maturation of the glomerular layer of the main olfactory bulb, in cell migration and early cell-cell contacts during tumor associated angiogenesis. Preferentially fucosylates soluble lactose and to a lesser extent fucosylates glycolipids gangliosides GA1 and GM1a. The sequence is that of Galactoside alpha-(1,2)-fucosyltransferase 1 from Aotus nancymaae (Ma's night monkey).